A 652-amino-acid chain; its full sequence is Transmembrane 9 superfamily member 12 (652 aa).

The first 20 residues, 1–20 (MFGVYRVFVLLVFVSQLCNG), serve as a signal peptide directing secretion. The Lumenal portion of the chain corresponds to 21 to 286 (FYLPGSYMHT…LKMEGARVHW (266 aa)). Residues 287–307 (FSILNSLMVIFFLAGIVFVIF) traverse the membrane as a helical segment. The Cytoplasmic portion of the chain corresponds to 308-362 (LRTVRRDLTKYEELDKEAQAQMNEELSGWKLVVGDVFREPEMSKLLCIMVGDGVR). Residues 363–383 (ITGMAVVTIVFAALGFMSPAS) traverse the membrane as a helical segment. At 384–386 (RGM) the chain is on the lumenal side. The helical transmembrane segment at 387–407 (LLTGMIILYLFLGIVAGYAGV) threads the bilayer. At 408–426 (RLWRTVKGTSEGWRSLSWS) the chain is on the cytoplasmic side. Residues 427-447 (IACFFPGIAFVILTVLNFLLW) form a helical membrane-spanning segment. Residues 448 to 460 (SSNSTGAIPISLY) lie on the Lumenal side of the membrane. A helical transmembrane segment spans residues 461 to 481 (FELLALWFCISVPLTLFGGFL). Residues 482–510 (GTRAEAIQFPVRTNQIPREIPERKYPSWL) are Cytoplasmic-facing. A helical membrane pass occupies residues 511–531 (LVLGAGTLPFGTLFIELFFIF). The Lumenal portion of the chain corresponds to 532–541 (SSIWLGRFYY). Residues 542-562 (VFGFLLIVLLLLVVVCAEVSV) traverse the membrane as a helical segment. Residues 563-580 (VLTYMHLCVEDWRWWWKA) lie on the Cytoplasmic side of the membrane. Residues 581–601 (FYASGSVALYVFAYSINYLVF) form a helical membrane-spanning segment. Residues 602 to 613 (DLQSLSGPVSAM) lie on the Lumenal side of the membrane. A helical transmembrane segment spans residues 614-634 (LYIGYSLLMAIAIMLATGTIG). Residues 635 to 652 (FLTSFYFVHYLFSSVKID) are Cytoplasmic-facing. The Endoplasmic reticulum export signal signature appears at 641–646 (FVHYLF). The Golgi retention signal motif lies at 650–652 (KID).

Belongs to the nonaspanin (TM9SF) (TC 9.A.2) family.

It localises to the endosome membrane. The protein localises to the golgi apparatus membrane. The polypeptide is Transmembrane 9 superfamily member 12 (Arabidopsis thaliana (Mouse-ear cress)).